The chain runs to 487 residues: Ribosome biogenesis protein YTM1 (487 aa).

The ubiquitin-like (UBL) domain stretch occupies residues 13–95 (VKVTFTTNEA…ETNLTLQYVR (83 aa)). WD repeat units lie at residues 122 to 161 (SPAG…LVTA), 168 to 206 (GHSA…ASGQ), 217 to 256 (GHRA…SPEA), 379 to 419 (GHTN…PASG), and 451 to 487 (GEGA…VVRE). A disordered region spans residues 253 to 277 (SPEADASLLPNAHTSKRRKVASSVT).

This sequence belongs to the WD repeat WDR12/YTM1 family. As to quaternary structure, component of the NOP7 complex, composed of ERB1, NOP7 and YTM1. The complex is held together by ERB1, which interacts with NOP7 via its N-terminal domain and with YTM1 via a high-affinity interaction between the seven-bladed beta-propeller domains of the 2 proteins. The NOP7 complex associates with the 66S pre-ribosome. Interacts (via UBL domain) with MDN1 (via VWFA/MIDAS domain).

The protein localises to the nucleus. Its subcellular location is the nucleolus. It localises to the nucleoplasm. Functionally, component of the NOP7 complex, which is required for maturation of the 25S and 5.8S ribosomal RNAs and formation of the 60S ribosome. This chain is Ribosome biogenesis protein YTM1, found in Podospora anserina (strain S / ATCC MYA-4624 / DSM 980 / FGSC 10383) (Pleurage anserina).